The chain runs to 900 residues: UPF0182 protein Ppro_3567 (900 aa).

Helical transmembrane passes span 15 to 35 (FFPL…LLNL), 60 to 80 (GAGL…LHVA), 112 to 132 (VSML…AMKW), 174 to 194 (FIIL…GGIL), 210 to 230 (LAVL…LDSF), 257 to 277 (VLTF…WKGV), and 282 to 302 (LLAP…YPGV).

This sequence belongs to the UPF0182 family.

Its subcellular location is the cell membrane. This is UPF0182 protein Ppro_3567 from Pelobacter propionicus (strain DSM 2379 / NBRC 103807 / OttBd1).